The sequence spans 325 residues: Outer spore wall protein LDS1 (325 aa).

The Cytoplasmic segment spans residues 1 to 91 (MSFTGSLALA…NTNKSSYSTT (91 aa)). Residues 92 to 112 (MLGILSSYLIMFALVSFVYWA) traverse the membrane as a helical segment. Residues 113–118 (TITPMY) are Extracellular-facing. Residues 119–139 (TAFLIVLGPIGLFIAIFHSFL) form a helical membrane-spanning segment. Over 140–208 (QANVFTLLFM…VKYMLGLSVL (69 aa)) the chain is Cytoplasmic. The helical transmembrane segment at 209 to 229 (FVLLVISFFPLIGPILFHILI) threads the bilayer. The Extracellular portion of the chain corresponds to 230-263 (SPFITQIYFTKVLRLQNFDNIQRRENIYLHAGQY). Residues 264 to 284 (ASFGFLAGLIESVPILAGFAI) traverse the membrane as a helical segment. Over 285–325 (STNTIGSVLFNLDHPMVPENLVETQAEIEAAPQDINQQPNQ) the chain is Cytoplasmic.

It belongs to the LDS family.

It is found in the prospore membrane. The protein resides in the lipid droplet. It localises to the spore wall. In terms of biological role, involved in spore wall assembly. The chain is Outer spore wall protein LDS1 from Saccharomyces cerevisiae (strain ATCC 204508 / S288c) (Baker's yeast).